We begin with the raw amino-acid sequence, 251 residues long: 1-(5-phosphoribosyl)-5-[(5-phosphoribosylamino)methylideneamino] imidazole-4-carboxamide isomerase (251 aa).

Aspartate 8 functions as the Proton acceptor in the catalytic mechanism. Residue aspartate 131 is the Proton donor of the active site.

It belongs to the HisA/HisF family.

Its subcellular location is the cytoplasm. It catalyses the reaction 1-(5-phospho-beta-D-ribosyl)-5-[(5-phospho-beta-D-ribosylamino)methylideneamino]imidazole-4-carboxamide = 5-[(5-phospho-1-deoxy-D-ribulos-1-ylimino)methylamino]-1-(5-phospho-beta-D-ribosyl)imidazole-4-carboxamide. Its pathway is amino-acid biosynthesis; L-histidine biosynthesis; L-histidine from 5-phospho-alpha-D-ribose 1-diphosphate: step 4/9. The protein is 1-(5-phosphoribosyl)-5-[(5-phosphoribosylamino)methylideneamino] imidazole-4-carboxamide isomerase of Burkholderia thailandensis (strain ATCC 700388 / DSM 13276 / CCUG 48851 / CIP 106301 / E264).